Here is an 892-residue protein sequence, read N- to C-terminus: Bifunctional uridylyltransferase/uridylyl-removing enzyme (892 aa).

The interval 1 to 348 (MPNFTGNTRP…LVDAKVHVRP (348 aa)) is uridylyltransferase. Residues 349–710 (INERFQARNG…RIHNQEPGTM (362 aa)) form a uridylyl-removing region. One can recognise an HD domain in the interval 467 to 589 (VDEHTLFLIH…VGDERRLNHL (123 aa)). ACT domains follow at residues 711–786 (EVFI…LTQP) and 822–892 (VMEL…YLER).

It belongs to the GlnD family. The cofactor is Mg(2+).

It carries out the reaction [protein-PII]-L-tyrosine + UTP = [protein-PII]-uridylyl-L-tyrosine + diphosphate. It catalyses the reaction [protein-PII]-uridylyl-L-tyrosine + H2O = [protein-PII]-L-tyrosine + UMP + H(+). With respect to regulation, uridylyltransferase (UTase) activity is inhibited by glutamine, while glutamine activates uridylyl-removing (UR) activity. In terms of biological role, modifies, by uridylylation and deuridylylation, the PII regulatory proteins (GlnB and homologs), in response to the nitrogen status of the cell that GlnD senses through the glutamine level. Under low glutamine levels, catalyzes the conversion of the PII proteins and UTP to PII-UMP and PPi, while under higher glutamine levels, GlnD hydrolyzes PII-UMP to PII and UMP (deuridylylation). Thus, controls uridylylation state and activity of the PII proteins, and plays an important role in the regulation of nitrogen assimilation and metabolism. In Nitrosococcus oceani (strain ATCC 19707 / BCRC 17464 / JCM 30415 / NCIMB 11848 / C-107), this protein is Bifunctional uridylyltransferase/uridylyl-removing enzyme.